Here is a 947-residue protein sequence, read N- to C-terminus: DNA mismatch repair protein MutS 2 (947 aa).

Positions Ile623–Asp643 are disordered. Gly659 to Ser666 contacts ATP. A disordered region spans residues Ala841 to Glu916.

The protein belongs to the DNA mismatch repair MutS family.

In terms of biological role, this protein is involved in the repair of mismatches in DNA. It is possible that it carries out the mismatch recognition step. This protein has a weak ATPase activity. The sequence is that of DNA mismatch repair protein MutS 2 from Haloarcula marismortui (strain ATCC 43049 / DSM 3752 / JCM 8966 / VKM B-1809) (Halobacterium marismortui).